Reading from the N-terminus, the 206-residue chain is Ras-related protein ralB-B (206 aa).

Gly-21–Ser-28 contributes to the GTP binding site. The Effector region signature appears at Tyr-43–Tyr-51. GTP contacts are provided by residues Asp-68 to Gln-72 and Asn-128 to Asp-131. The span at Lys-180–Gly-189 shows a compositional bias: basic and acidic residues. Residues Lys-180–Leu-206 form a disordered region. Positions Lys-190–Lys-200 are enriched in basic residues. Cys-203 is subject to Cysteine methyl ester. Cys-203 carries the S-geranylgeranyl cysteine lipid modification. A propeptide spans Cys-204–Leu-206 (removed in mature form).

The protein belongs to the small GTPase superfamily. Ras family. As to quaternary structure, interacts with ralbp1 and rap1gds1.

It is found in the cell membrane. It localises to the midbody. The catalysed reaction is GTP + H2O = GDP + phosphate + H(+). Its function is as follows. Multifunctional GTPase involved in a variety of cellular processes including gene expression, cell migration, cell proliferation, oncogenic transformation and membrane trafficking. Accomplishes its multiple functions by interacting with distinct downstream effectors. Acts as a GTP sensor for GTP-dependent exocytosis of dense core vesicles. Required both to stabilize the assembly of the exocyst complex and to localize functional exocyst complexes to the leading edge of migrating cells. Required for suppression of apoptosis. In late stages of cytokinesis, upon completion of the bridge formation between dividing cells, mediates exocyst recruitment to the midbody to drive abscission. Regulates the actin cytoskeleton to play a role in gastrulation or neurulation. During the cleavage stages, the GTP-bound form induces a cortical reaction that affects the localization of pigment granules. Activated by the FGF pathway via ras and ral-GDS, but independently of raf. Directs ralbp1 to the plasma membrane. Involved in ligand-dependent receptor mediated endocytosis of the EGF and insulin receptors. This is Ras-related protein ralB-B (ralb-b) from Xenopus laevis (African clawed frog).